Here is a 474-residue protein sequence, read N- to C-terminus: Glutathione synthetase (474 aa).

Position 2 is an N-acetylalanine (A2). R125 is a binding site for substrate. Position 144 (E144) interacts with ATP. Residues E144 and N146 each coordinate Mg(2+). Substrate contacts are provided by residues 148-151 (ISAS), 214-216 (ERN), Q220, and 267-270 (RDGY). ATP is bound by residues K305, 364–373 (KPQREGGGNN), Y375, and 398–401 (MEKI). Position 368 (E368) interacts with Mg(2+). S415 bears the Phosphoserine mark. Position 425 (E425) interacts with ATP. Position 450 (R450) interacts with substrate. 2 residues coordinate ATP: K452 and D458. Substrate is bound at residue 461–462 (VA).

This sequence belongs to the eukaryotic GSH synthase family. As to quaternary structure, homodimer. Mg(2+) serves as cofactor.

It carries out the reaction gamma-L-glutamyl-L-cysteine + glycine + ATP = glutathione + ADP + phosphate + H(+). The catalysed reaction is gamma-L-glutamyl-(2S)-2-aminobutanoate + glycine + ATP = ophthalmate + ADP + phosphate + H(+). The protein operates within sulfur metabolism; glutathione biosynthesis; glutathione from L-cysteine and L-glutamate: step 2/2. Catalyzes the production of glutathione from gamma-glutamylcysteine and glycine in an ATP-dependent manner. Glutathione (gamma-glutamylcysteinylglycine, GSH) is the most abundant intracellular thiol in living aerobic cells and is required for numerous processes including the protection of cells against oxidative damage, amino acid transport, the detoxification of foreign compounds, the maintenance of protein sulfhydryl groups in a reduced state and acts as a cofactor for a number of enzymes. Participates in ophthalmate biosynthesis in hepatocytes. The sequence is that of Glutathione synthetase from Homo sapiens (Human).